The following is a 2009-amino-acid chain: ADP-ribosylation factor guanine nucleotide-exchange factor SEC7 (2009 aa).

A disordered region spans residues 1-220; the sequence is MSEQNSVVNA…ISLSSNGSNT (220 aa). Polar residues predominate over residues 17–33; sequence ISSNVETASSVNPSVKP. Positions 37-53 are enriched in basic and acidic residues; that stretch reads IKEEAKETNGEDQKCKG. Residues 91 to 118 show a composition bias toward acidic residues; it reads EGEDGDEDEDEDEDEDEDNGDEDDEDVD. A compositionally biased stretch (low complexity) spans 134–143; that stretch reads SVSGESTESS. The segment covering 144–154 has biased composition (acidic residues); the sequence is SGEDEESDESD. Low complexity predominate over residues 155–165; sequence GNTSNSSSGDE. Positions 166-184 are enriched in acidic residues; the sequence is SGSEEEEEEEEEEEEEENA. A compositionally biased stretch (polar residues) spans 194–209; the sequence is SVPTNDSTAPRSTHTR. Low complexity predominate over residues 210-220; it reads NISLSSNGSNT. Phosphoserine occurs at positions 212 and 215. Position 334 is a phosphothreonine (Thr-334). Phosphoserine occurs at positions 447, 452, and 455. The short motif at 653–657 is the HUS box element; the sequence is NYDCN. Over residues 771 to 788 the composition is skewed to low complexity; sequence SSARQESRSSLSNDVRSS. Residues 771 to 814 are disordered; sequence SSARQESRSSLSNDVRSSIMTSNDDFKPTYEDEESRSLSSQNID. Residue Lys-797 forms a Glycyl lysine isopeptide (Lys-Gly) (interchain with G-Cter in ubiquitin) linkage. Phosphoserine is present on Ser-807. The 187-residue stretch at 824–1010 folds into the SEC7 domain; it reads LKLRKTALSE…LFNEIANNEI (187 aa). Asp-940 provides a ligand contact to Mg(2+). The tract at residues 1017-1220 is HDS1 domain; the sequence is HQAMLSGDTN…QARVANPRVS (204 aa). Ser-1226 bears the Phosphoserine mark. Residue Thr-1240 is modified to Phosphothreonine. Positions 1708-1723 are enriched in polar residues; the sequence is GRKSSVSHHQTTNDTS. The segment at 1708 to 1803 is disordered; that stretch reads GRKSSVSHHQ…KKTKHMKRNE (96 aa). Basic and acidic residues predominate over residues 1724-1751; the sequence is QHSDDDSNDRRENDSNISETVERAHQEE. 2 positions are modified to phosphoserine: Ser-1741 and Ser-1752. Over residues 1764 to 1777 the composition is skewed to polar residues; sequence LNGQTKLNNGNSVP. Positions 1836 to 1883 are C2 domain-interacting region (CIR); the sequence is FENEDFAHCIPYKEAIRITRLLEKSYEFSRDFNEDYGLRTRLVEARVV.

In terms of assembly, interacts with ARF1. Interacts (via C-terminus) with RSP5 ubiquitin ligase.

Its subcellular location is the cytoplasm. It is found in the golgi apparatus. The protein resides in the trans-Golgi network. The protein localises to the cytoplasmic vesicle. It localises to the COPI-coated vesicle membrane. Its subcellular location is the COPII-coated vesicle membrane. Functionally, guanine exchange factor that acts as an activator of ARF1 at the trans-Golgi network and is thus involved in vesicular budding and traffic between compartments of the Golgi apparatus. Activation of Arf (ADP-ribosylation factor) GTPases is essential for vesicle formation via recruitment of cargo adapters and coat proteins necessary for Golgi trafficking. Also plays an essential role in ER-to-Golgi traffic. SEC7 also acts as an effector of two Rab GTPases, YPT1 and YPT31/32. This Saccharomyces cerevisiae (strain ATCC 204508 / S288c) (Baker's yeast) protein is ADP-ribosylation factor guanine nucleotide-exchange factor SEC7.